The sequence spans 425 residues: Putative E3 ubiquitin-protein ligase UBR7 (425 aa).

The UBR-type zinc-finger motif lies at 44–116 (EKCSYSQGSV…KNLECKLFPD (73 aa)). The PHD-type; atypical zinc finger occupies 132–188 (GLYCVCKRPYPDPEDEVPDEMIQCVVCEDWFHGRHLGAIPPESGDFQEMVCQACMRR). Residues 212-269 (LPNATGMGDEDVSKPENGAPQDNGLKEDAPEHGRDSVNEVKAEQKNEPCSSSSSESDL) are disordered. Residues lysine 225 and lysine 252 each participate in a glycyl lysine isopeptide (Lys-Gly) (interchain with G-Cter in SUMO2) cross-link. A compositionally biased stretch (basic and acidic residues) spans 235–257 (GLKEDAPEHGRDSVNEVKAEQKN). A Phosphoserine modification is found at serine 264. Residues lysine 274 and lysine 398 each participate in a glycyl lysine isopeptide (Lys-Gly) (interchain with G-Cter in SUMO2) cross-link.

Expressed in testis and sperm (at protein level).

It catalyses the reaction S-ubiquitinyl-[E2 ubiquitin-conjugating enzyme]-L-cysteine + [acceptor protein]-L-lysine = [E2 ubiquitin-conjugating enzyme]-L-cysteine + N(6)-ubiquitinyl-[acceptor protein]-L-lysine.. The protein operates within protein modification; protein ubiquitination. Functionally, E3 ubiquitin-protein ligase which is a component of the N-end rule pathway. Recognizes and binds to proteins bearing specific N-terminal residues that are destabilizing according to the N-end rule, leading to their ubiquitination and subsequent degradation. The chain is Putative E3 ubiquitin-protein ligase UBR7 (Ubr7) from Mus musculus (Mouse).